The following is a 324-amino-acid chain: Uric acid degradation bifunctional protein TTL (324 aa).

A2 is modified (N-acetylalanine). The required for BRI1-binding stretch occupies residues 2 to 29 (AMEIGEDEWKVCCGSSEFAKQMSTSGPL). Positions 2–161 (AMEIGEDEWK…LRMAKLFSDK (160 aa)) are OHCU decarboxylase. The Proton donor; for OHCU decarboxylase activity role is filled by H58. Positions 58, 59, 80, 111, 113, and 115 each coordinate (S)-allantoin. Positions 178–324 (KPQDRLRIIG…PFSFSTYRGS (147 aa)) are HIU hydrolase. The Internal peroxisomal targeting signal (PTS2) signature appears at 182–190 (RLRIIGGHL).

The protein in the N-terminal section; belongs to the OHCU decarboxylase family. In the C-terminal section; belongs to the transthyretin family. 5-hydroxyisourate hydrolase subfamily. Homodimer. Forms tetramers. Interacts with BRI1 in a kinase-dependent manner. Interacts with B1L. Post-translationally, phosphorylated by BRI1 in vitro. In terms of tissue distribution, expressed ubiquitously with highest levels in flowers buds and elongating inflorescences. As to expression, mainly expressed in stems and leaves, and, to a lower extent, in flowers, flower buds and seedlings. Strongly expressed in flower buds and leaves, to a lower extent in stems, and at low levels in seedlings and flowers.

The protein resides in the cell membrane. Its subcellular location is the peroxisome. The protein localises to the cytoplasm. It localises to the cytosol. The enzyme catalyses 5-hydroxyisourate + H2O = 5-hydroxy-2-oxo-4-ureido-2,5-dihydro-1H-imidazole-5-carboxylate + H(+). It carries out the reaction 5-hydroxy-2-oxo-4-ureido-2,5-dihydro-1H-imidazole-5-carboxylate + H(+) = (S)-allantoin + CO2. It functions in the pathway purine metabolism; urate degradation; (S)-allantoin from urate: step 2/3. Its pathway is purine metabolism; urate degradation; (S)-allantoin from urate: step 3/3. Functionally, involved in the last two steps of the degradation of uric acid, i.e. the hydrolysis of 5-hydroxyisourate (HIU) to 2-oxo-4-hydroxy-4-carboxy-5-ureidoimidazoline (OHCU) and its stereoselective decarboxylation to (S)-allantoin, a major ureide compound. Might function as a negative regulator to modulate brassinosteroid-mediated plant growth. Together with B1L, prevents plant growth and development, but by opposition to B1L, negatively regulates cold tolerance, probably in a brassinosteroid (BR) and allantoin-dependent manner. The sequence is that of Uric acid degradation bifunctional protein TTL from Arabidopsis thaliana (Mouse-ear cress).